We begin with the raw amino-acid sequence, 227 residues long: Broad specificity amino-acid racemase RacX (227 aa).

51–53 serves as a coordination point for substrate; it reads DRP. Catalysis depends on C82, which acts as the Proton donor/acceptor. Substrate contacts are provided by residues 83–85 and K161; that span reads NTA. C191 serves as the catalytic Proton donor/acceptor.

The protein belongs to the aspartate/glutamate racemases family. Homodimer.

It carries out the reaction an L-alpha-amino acid = a D-alpha-amino acid. The enzyme catalyses (2S,6S)-2,6-diaminopimelate = meso-2,6-diaminopimelate. It catalyses the reaction L-lysine = D-lysine. The catalysed reaction is L-arginine = D-arginine. It carries out the reaction L-ornithine = D-ornithine. The enzyme catalyses L-histidine = D-histidine. It catalyses the reaction L-alanine = D-alanine. The catalysed reaction is L-tyrosine = D-tyrosine. It carries out the reaction L-phenylalanine = D-phenylalanine. The enzyme catalyses L-serine = D-serine. It catalyses the reaction L-glutamine = D-glutamine. The catalysed reaction is L-methionine = D-methionine. It carries out the reaction L-asparagine = D-asparagine. The enzyme catalyses L-homoserine = D-homoserine. Functionally, amino-acid racemase able to utilize a broad range of substrates. Preferentially catalyzes the epimerization of LL-diaminopimelate, as well as the racemization of D-lysine, L-arginine, L-ornithine, L-lysine and D-arginine. Has lower activity against D-ornithine, L-histidine, L-alanine, L-tyrosine, L-phenylalanine, L-serine, L-glutamine, L-methionine, L-asparagine and L-homoserine. Has weak activity against L-norleucine, L-aminobutyric acid and L-norvaline. Has no activity toward nine L-amino acids (Thr, Glu, Asp, Val, Leu, Ile, Trp, Cit and Aad). D-amino acids might be used as components of peptidoglycan and/or be involved in peptidoglycan metabolism and remodeling. This is Broad specificity amino-acid racemase RacX (racX) from Bacillus subtilis (strain 168).